We begin with the raw amino-acid sequence, 308 residues long: Aspartate carbamoyltransferase catalytic subunit (308 aa).

Carbamoyl phosphate contacts are provided by arginine 57 and threonine 58. Lysine 86 serves as a coordination point for L-aspartate. Carbamoyl phosphate contacts are provided by arginine 107, histidine 135, and glutamine 138. 2 residues coordinate L-aspartate: arginine 168 and arginine 229. Residues leucine 268 and proline 269 each contribute to the carbamoyl phosphate site.

It belongs to the aspartate/ornithine carbamoyltransferase superfamily. ATCase family. Heterooligomer of catalytic and regulatory chains.

The catalysed reaction is carbamoyl phosphate + L-aspartate = N-carbamoyl-L-aspartate + phosphate + H(+). Its pathway is pyrimidine metabolism; UMP biosynthesis via de novo pathway; (S)-dihydroorotate from bicarbonate: step 2/3. Functionally, catalyzes the condensation of carbamoyl phosphate and aspartate to form carbamoyl aspartate and inorganic phosphate, the committed step in the de novo pyrimidine nucleotide biosynthesis pathway. This chain is Aspartate carbamoyltransferase catalytic subunit, found in Pyrococcus horikoshii (strain ATCC 700860 / DSM 12428 / JCM 9974 / NBRC 100139 / OT-3).